The sequence spans 161 residues: Ribonuclease P protein component 2 (161 aa).

Belongs to the eukaryotic/archaeal RNase P protein component 2 family. In terms of assembly, consists of a catalytic RNA component and at least 4-5 protein subunits.

Its subcellular location is the cytoplasm. The enzyme catalyses Endonucleolytic cleavage of RNA, removing 5'-extranucleotides from tRNA precursor.. Functionally, part of ribonuclease P, a protein complex that generates mature tRNA molecules by cleaving their 5'-ends. This is Ribonuclease P protein component 2 from Haloarcula marismortui (strain ATCC 43049 / DSM 3752 / JCM 8966 / VKM B-1809) (Halobacterium marismortui).